Here is a 1700-residue protein sequence, read N- to C-terminus: Rho guanine nucleotide exchange factor 28 (1700 aa).

Residues 288–335 are disordered; it reads TERATMPSGAAETEEEVRNLESGRSPSEEEEDGQLVKSQADGPSEQED. Residues Ser312, Ser314, and Ser478 each carry the phosphoserine modification. The disordered stretch occupies residues 483–525; it reads VADSEEEGRSEPPICYAVGSQSSPRTGLPGGDELDSFDANTEP. A Phosphoserine modification is found at Ser623. Residues 651–698 form a Phorbol-ester/DAG-type zinc finger; sequence RHQFVPGTFSGVLQCSGCDKTLLGKESLQCANCKANTHKGCKDTVPPC. The span at 709 to 720 shows a compositional bias: polar residues; that stretch reads NKPQTILGSSSV. Disordered stretches follow at residues 709–761 and 774–799; these read NKPQ…VPGT and ESEGDSNSWRSRSHSDELFQSMGSSP. Over residues 728 to 737 the composition is skewed to low complexity; sequence LSLHPSPSMP. Polar residues predominate over residues 774-783; that stretch reads ESEGDSNSWR. A DH domain is found at 848–1043; sequence KRQDVIFELM…KDMIAAVDLK (196 aa). The PH domain occupies 1085-1187; sequence ALLHDGLVYW…WMRRIQQAVE (103 aa). Residues 1186–1207 are disordered; sequence VESCPEEEGGRTSESDEERRKA. Over residues 1193-1207 the composition is skewed to basic and acidic residues; it reads EGGRTSESDEERRKA. The segment at 1294–1303 is interaction with PTK2/FAK1; required for regulation of axonal branching and synapse formation; sequence DVSQPSEEGP. A mediates cytoplasmic retention and interaction with YWHAH region spans residues 1369 to 1380; it reads IIQAIQNLTRLL. The interval 1421–1700 is interaction with microtubules; that stretch reads QEKSRYLEKH…DGAEENIVYL (280 aa). Positions 1473 to 1522 form a coiled coil; sequence ERECQSQEELLLRHRSELDHQLQEYQQNLERLREGQRMVERERQRMRDQQ. The interval 1493–1524 is RNA-binding; that stretch reads QLQEYQQNLERLREGQRMVERERQRMRDQQGL. Residue Ser1535 is modified to Phosphoserine. The tract at residues 1563–1576 is mediates cytoplasmic retention and interaction with MAPK8IP1; it reads FLNDAFTHMSLNTS. The tract at residues 1574–1598 is disordered; it reads NTSNKPNPSGAPWDAHPPGGSHLDL. Ser1604 bears the Phosphoserine mark. The interval 1612-1700 is disordered; sequence VSQPSDVNSE…DGAEENIVYL (89 aa). Residues 1613–1623 are compositionally biased toward polar residues; sequence SQPSDVNSELW. Residues 1633–1642 are compositionally biased toward basic and acidic residues; it reads ARQESIKDSC. The segment covering 1647 to 1672 has biased composition (polar residues); it reads DLNSFQTESPDPQDSNQRGPQPQTLI.

Homooligomer; forms cytoplasmic aggregates. Forms a complex with MAPK8 and MAPK8IP1. Interacts with RHOA. Interacts with microtubules. Interacts with YWHAE and YWHAH. Interacts with PTK2/FAK1. Interacts with NEFL. Interacts with CTNND2; prevents interaction with RHOA. Post-translationally, phosphorylated on tyrosine upon stimulation of cells by laminin.

The protein localises to the cytoplasm. Its subcellular location is the cell membrane. In terms of biological role, functions as a RHOA-specific guanine nucleotide exchange factor regulating signaling pathways downstream of integrins and growth factor receptors. Functions in axonal branching, synapse formation and dendritic morphogenesis. Also functions in focal adhesion formation, cell motility and B-lymphocytes activation. May regulate NEFL expression and aggregation and play a role in apoptosis. This chain is Rho guanine nucleotide exchange factor 28 (Arhgef28), found in Rattus norvegicus (Rat).